We begin with the raw amino-acid sequence, 446 residues long: Elongation factor 1-alpha (446 aa).

Residues K5–K230 form the tr-type G domain. Residues G14–S21 form a G1 region. G14–S21 contributes to the GTP binding site. A G2 region spans residues G70–D74. The interval D91–G94 is G3. GTP-binding positions include D91 to H95 and N153 to D156. Residues N153–D156 are G4. Residues S194–W196 form a G5 region.

The protein belongs to the TRAFAC class translation factor GTPase superfamily. Classic translation factor GTPase family. EF-Tu/EF-1A subfamily.

Its subcellular location is the cytoplasm. This protein promotes the GTP-dependent binding of aminoacyl-tRNA to the A-site of ribosomes during protein biosynthesis. This is Elongation factor 1-alpha (EFAA) from Stylonychia lemnae (Ciliate).